Consider the following 209-residue polypeptide: Large ribosomal subunit protein bL9 (209 aa).

The tract at residues 181 to 209 (EASEEGQELAAQREATEDAGADESEETEA) is disordered. Over residues 197-209 (EDAGADESEETEA) the composition is skewed to acidic residues.

The protein belongs to the bacterial ribosomal protein bL9 family.

Functionally, binds to the 23S rRNA. The chain is Large ribosomal subunit protein bL9 from Maricaulis maris (strain MCS10) (Caulobacter maris).